We begin with the raw amino-acid sequence, 222 residues long: Small ribosomal subunit protein eS8z (222 aa).

Disordered stretches follow at residues 1 to 37 and 125 to 147; these read MGIS…ANTK and KKKS…VAAP. A compositionally biased stretch (basic residues) spans 8-26; sequence IHKRRATGGKQKQWRKKRK.

This sequence belongs to the eukaryotic ribosomal protein eS8 family.

The protein is Small ribosomal subunit protein eS8z (RPS8A) of Arabidopsis thaliana (Mouse-ear cress).